We begin with the raw amino-acid sequence, 443 residues long: Tol-Pal system protein TolB (443 aa).

The N-terminal stretch at 1–24 (MSFQIRVFTAILAVLSLFTAPVLA) is a signal peptide. Residues 424–443 (LRPVRTPEGGSDPSWSPLQR) are disordered.

It belongs to the TolB family. As to quaternary structure, the Tol-Pal system is composed of five core proteins: the inner membrane proteins TolA, TolQ and TolR, the periplasmic protein TolB and the outer membrane protein Pal. They form a network linking the inner and outer membranes and the peptidoglycan layer.

It is found in the periplasm. Functionally, part of the Tol-Pal system, which plays a role in outer membrane invagination during cell division and is important for maintaining outer membrane integrity. The polypeptide is Tol-Pal system protein TolB (Roseobacter denitrificans (strain ATCC 33942 / OCh 114) (Erythrobacter sp. (strain OCh 114))).